Reading from the N-terminus, the 269-residue chain is 3-methyl-2-oxobutanoate hydroxymethyltransferase (269 aa).

2 residues coordinate Mg(2+): aspartate 42 and aspartate 81. 3-methyl-2-oxobutanoate contacts are provided by residues 42 to 43 (DS), aspartate 81, and lysine 111. Residue glutamate 113 coordinates Mg(2+). Glutamate 179 functions as the Proton acceptor in the catalytic mechanism. Positions 250 to 269 (SGEFPRESHSHTEDELDDLY) are disordered. Residues 252–262 (EFPRESHSHTE) are compositionally biased toward basic and acidic residues.

It belongs to the PanB family. In terms of assembly, homodecamer; pentamer of dimers. The cofactor is Mg(2+).

It is found in the cytoplasm. The catalysed reaction is 3-methyl-2-oxobutanoate + (6R)-5,10-methylene-5,6,7,8-tetrahydrofolate + H2O = 2-dehydropantoate + (6S)-5,6,7,8-tetrahydrofolate. It functions in the pathway cofactor biosynthesis; coenzyme A biosynthesis. Catalyzes the reversible reaction in which hydroxymethyl group from 5,10-methylenetetrahydrofolate is transferred onto alpha-ketoisovalerate to form ketopantoate. The protein is 3-methyl-2-oxobutanoate hydroxymethyltransferase of Haloarcula marismortui (strain ATCC 43049 / DSM 3752 / JCM 8966 / VKM B-1809) (Halobacterium marismortui).